Consider the following 95-residue polypeptide: UPF0473 protein BPUM_2377 (95 aa).

The protein belongs to the UPF0473 family.

This is UPF0473 protein BPUM_2377 from Bacillus pumilus (strain SAFR-032).